The chain runs to 655 residues: MGIFSIANQHIRFAVKLATAIVLALFVGFHFQLETPRWAVLTAAIVAAGPAFAAGGEPYSGAIRYRGFLRIIGTFIGCIAGLVIIIAMIRAPLLMILVCCIWAGFCTWISSLVRIENSYAWGLAGYTALIIVITIQPEPLLTPQFAVERCSEIVIGIVCAIIADLLFSPRSIKQEVDRELESLLVAQYQLMQLCIKHGDGEVVDKAWGDLVRRTTGLQGMRSNLNMESSRWARANRRLKAINTLSLTLITQSCETYLIQNTRPELITDTFREFFDTPVETAQDVHKQLKRLRRVIAWTGERETPVTIYSWVAAATRYQLLKRGVISNTKINATEEEILQGEPEVKVESAERHHAMVNFWRTTLSCILGTLFWLWTGWTSGSGAMVMIAVVTSLAMRLPNPRMVAIDFIYGTLAALPLGLLYFLVIIPNTQQSMLLLCISLAVLGFFLGIEVQQRLLGSMGALASTINIIVLDNPMTFHFSQFLDSALGQIVGCVLAFTVILLVRDKSRDRTGRVLLNQFVSAAVSAMTTNVARRKENHLPALYQQLFLLMNKFPGDLPKFRLALTMIIAHQRLRDAPIPVNEDLSAFHRQMRRTADHVISARSDDKRRRYFGQLLEELEIYQEKLRIWQAPPQVTEPVHRLAGMLHKYQHALTDS.

11 helical membrane passes run 13–33 (FAVK…HFQL), 38–58 (WAVL…GGEP), 69–89 (LRII…IAMI), 93–113 (LLMI…SSLV), 121–141 (WGLA…EPLL), 152–172 (EIVI…PRSI), 370–390 (LFWL…IAVV), 407–427 (FIYG…VIIP), 431–451 (QSML…GIEV), 455–475 (LLGS…DNPM), and 482–502 (FLDS…VILL).

It belongs to the aromatic acid exporter ArAE (TC 2.A.85) family.

Its subcellular location is the cell inner membrane. Forms an efflux pump with AaeA. Could function as a metabolic relief valve, allowing to eliminate certain compounds when they accumulate to high levels in the cell. The polypeptide is p-hydroxybenzoic acid efflux pump subunit AaeB (Shigella boydii serotype 4 (strain Sb227)).